Reading from the N-terminus, the 155-residue chain is V-type proton ATPase 16 kDa proteolipid subunit c (155 aa).

Topologically, residues 1-10 are lumenal; that stretch reads MADIKNNPEY. Residues 11–33 traverse the membrane as a helical segment; the sequence is SSFFGVMGASSAMVFSAMGAAYG. Over 34-55 the chain is Cytoplasmic; it reads TAKSGTGIAAMSVMRPELIMKS. Residues 56 to 76 traverse the membrane as a helical segment; that stretch reads IIPVVMAGIIAIYGLVVAVLI. Topologically, residues 77–92 are lumenal; the sequence is ANSLTDGITLYRSFLQ. Residues 93-114 form a helical membrane-spanning segment; sequence LGAGLSVGLSGLAAGFAIGIVG. Residues 115 to 131 lie on the Cytoplasmic side of the membrane; the sequence is DAGVRGTAQQPRLFVGM. The chain crosses the membrane as a helical span at residues 132–152; it reads ILILIFAEVLGLYGLIVALIL. Over 153–155 the chain is Lumenal; it reads STK.

This sequence belongs to the V-ATPase proteolipid subunit family. As to quaternary structure, V-ATPase is a heteromultimeric enzyme made up of two complexes: the ATP-hydrolytic V1 complex and the proton translocation V0 complex. The V1 complex consists of three catalytic AB heterodimers that form a heterohexamer, three peripheral stalks each consisting of EG heterodimers, one central rotor including subunits D and F, and the regulatory subunits C and H. The proton translocation complex V0 consists of the proton transport subunit a, a ring of proteolipid subunits c9c'', rotary subunit d, subunits e and f, and the accessory subunits ATP6AP1/Ac45 and ATP6AP2/PRR. Interacts with the V0 complex V-ATPase subunit a4 ATP6V0A4. Interacts with LASS2. Interacts with RNF182; this interaction leads to ubiquitination and degradation via the proteasome pathway. Ubiquitinated by RNF182, leading to its degradation via the ubiquitin-proteasome pathway.

It is found in the cytoplasmic vesicle. The protein localises to the clathrin-coated vesicle membrane. Its subcellular location is the secretory vesicle. It localises to the synaptic vesicle membrane. Its function is as follows. Proton-conducting pore forming subunit of the V0 complex of vacuolar(H+)-ATPase (V-ATPase), a multisubunit enzyme composed of a peripheral complex (V1) that hydrolyzes ATP and a membrane integral complex (V0) that translocates protons. V-ATPase is responsible for acidifying and maintaining the pH of intracellular compartments and in some cell types, is targeted to the plasma membrane, where it is responsible for acidifying the extracellular environment. The chain is V-type proton ATPase 16 kDa proteolipid subunit c (Atp6v0c) from Mus musculus (Mouse).